Consider the following 658-residue polypeptide: Glycogen debranching enzyme (658 aa).

The Nucleophile role is filled by Asp-335. Glu-370 acts as the Proton donor in catalysis. The segment covering Asn-457–Thr-468 has biased composition (basic and acidic residues). Residues Asn-457 to Thr-478 are disordered.

Belongs to the glycosyl hydrolase 13 family.

It carries out the reaction Hydrolysis of (1-&gt;6)-alpha-D-glucosidic linkages to branches with degrees of polymerization of three or four glucose residues in limit dextrin.. The protein operates within glycan degradation; glycogen degradation. Functionally, removes maltotriose and maltotetraose chains that are attached by 1,6-alpha-linkage to the limit dextrin main chain, generating a debranched limit dextrin. In Pectobacterium carotovorum subsp. carotovorum (strain PC1), this protein is Glycogen debranching enzyme.